The chain runs to 669 residues: DNA ligase (669 aa).

Residues 34–38 (DAEYD), 83–84 (SL), and Glu-114 each bind NAD(+). The N6-AMP-lysine intermediate role is filled by Lys-116. The NAD(+) site is built by Arg-137, Glu-171, Lys-287, and Lys-311. The Zn(2+) site is built by Cys-405, Cys-408, Cys-423, and Cys-428. The region spanning 591–669 (NVESYFAGKT…EERFLQELNK (79 aa)) is the BRCT domain.

Belongs to the NAD-dependent DNA ligase family. LigA subfamily. It depends on Mg(2+) as a cofactor. Requires Mn(2+) as cofactor.

The enzyme catalyses NAD(+) + (deoxyribonucleotide)n-3'-hydroxyl + 5'-phospho-(deoxyribonucleotide)m = (deoxyribonucleotide)n+m + AMP + beta-nicotinamide D-nucleotide.. In terms of biological role, DNA ligase that catalyzes the formation of phosphodiester linkages between 5'-phosphoryl and 3'-hydroxyl groups in double-stranded DNA using NAD as a coenzyme and as the energy source for the reaction. It is essential for DNA replication and repair of damaged DNA. This Bacillus anthracis (strain A0248) protein is DNA ligase.